We begin with the raw amino-acid sequence, 252 residues long: Probable transcriptional regulator SauR (252 aa).

The 63-residue stretch at 6-68 folds into the HTH iclR-type domain; that stretch reads NAAAVRAFRI…AGNRHYECSS (63 aa). Positions 28–47 form a DNA-binding region, H-T-H motif; it reads LAAIVQAIELPKQTVHRILK. Residues 83–252 form the IclR-ED domain; sequence PAAARHAILQ…ADEMVKTFCE (170 aa).

Its function is as follows. May regulate transcription of the sauSTU operon. The protein is Probable transcriptional regulator SauR (sauR) of Cupriavidus necator (strain ATCC 17699 / DSM 428 / KCTC 22496 / NCIMB 10442 / H16 / Stanier 337) (Ralstonia eutropha).